The sequence spans 506 residues: Serine/threonine-protein kinase RIO1 (506 aa).

Residues 22–52 (TASSSSDDEPEQAVVKQEKLEAGEQIEEQYD) form a disordered region. The Protein kinase domain maps to 142-506 (LNIDGCISTG…KKRAHRQHMK (365 aa)). Residues 148 to 156 (ISTGKEANV), Lys169, and Leu241 each bind ATP. Residue Asp285 is the Proton acceptor of the active site. Asn290 contributes to the ATP binding site. 2 residues coordinate Mg(2+): Asn290 and Asp302. The 4-aspartylphosphate intermediate role is filled by Asp302. The tract at residues 418–506 (GDGFGEEHDD…KKRAHRQHMK (89 aa)) is disordered. Over residues 424–435 (EHDDSDDNDDEE) the composition is skewed to acidic residues. A compositionally biased stretch (basic and acidic residues) spans 454 to 490 (EKERKIAMHTRNREETAEERKERKAAVKEEKREQRKE). Basic residues predominate over residues 491 to 506 (KIPKHLKKRAHRQHMK).

Belongs to the protein kinase superfamily. RIO-type Ser/Thr kinase family. Mg(2+) serves as cofactor. As to expression, expressed in vulva and uterine cells, uterine seam cells (utse), spermatheca and in the nervous system including chemosensory neurons in the head, nerve ring neurons (RID/RIF), inhibitory motor neurons (DA/DD/VA/VD), mechanosensory neurons (ALML/PLML) and tail sensory neurons (DVA//PDA). Also expressed in intestine and pharynx (procorpus) and rectal valve and gland.

The protein localises to the cytoplasm. It catalyses the reaction L-seryl-[protein] + ATP = O-phospho-L-seryl-[protein] + ADP + H(+). It carries out the reaction L-threonyl-[protein] + ATP = O-phospho-L-threonyl-[protein] + ADP + H(+). Functionally, involved in the final steps of cytoplasmic maturation of the 40S ribosomal subunit. Despite the protein kinase domain is proposed to act predominantly as an ATPase. The catalytic activity regulates its dynamic association with the 40S subunit. Plays a role in oogenesis by regulating germ cell proliferation, progression through diplotene and diakinesis stages and oocyte maturation. Regulates germline development probably by regulating the phosphorylation of mpk-1. Involved in larval development. The chain is Serine/threonine-protein kinase RIO1 from Caenorhabditis elegans.